We begin with the raw amino-acid sequence, 482 residues long: Cardiolipin synthase (482 aa).

A run of 2 helical transmembrane segments spans residues 4–24 (LAYL…VTVF) and 34–54 (WAWL…YLIF). PLD phosphodiesterase domains are found at residues 217-244 (LNYR…GDEY) and 395-422 (DNGF…DFRS). Active-site residues include H222, K224, D229, H400, K402, and D407.

The protein belongs to the phospholipase D family. Cardiolipin synthase subfamily.

The protein resides in the cell membrane. The catalysed reaction is 2 a 1,2-diacyl-sn-glycero-3-phospho-(1'-sn-glycerol) = a cardiolipin + glycerol. Catalyzes the reversible phosphatidyl group transfer from one phosphatidylglycerol molecule to another to form cardiolipin (CL) (diphosphatidylglycerol) and glycerol. In Listeria monocytogenes serotype 4a (strain HCC23), this protein is Cardiolipin synthase (cls).